Consider the following 426-residue polypeptide: Proline--tRNA ligase (426 aa).

This sequence belongs to the class-II aminoacyl-tRNA synthetase family. ProS type 2 subfamily. Homodimer.

It localises to the cytoplasm. It catalyses the reaction tRNA(Pro) + L-proline + ATP = L-prolyl-tRNA(Pro) + AMP + diphosphate. Its function is as follows. Catalyzes the attachment of proline to tRNA(Pro) in a two-step reaction: proline is first activated by ATP to form Pro-AMP and then transferred to the acceptor end of tRNA(Pro). This is Proline--tRNA ligase from Ehrlichia ruminantium (strain Gardel).